The following is a 451-amino-acid chain: Exodeoxyribonuclease 7 large subunit (451 aa).

Belongs to the XseA family. Heterooligomer composed of large and small subunits.

The protein localises to the cytoplasm. It catalyses the reaction Exonucleolytic cleavage in either 5'- to 3'- or 3'- to 5'-direction to yield nucleoside 5'-phosphates.. Its function is as follows. Bidirectionally degrades single-stranded DNA into large acid-insoluble oligonucleotides, which are then degraded further into small acid-soluble oligonucleotides. The polypeptide is Exodeoxyribonuclease 7 large subunit (Neisseria gonorrhoeae (strain ATCC 700825 / FA 1090)).